The primary structure comprises 585 residues: Folylpolyglutamate synthase, mitochondrial (585 aa).

Residues Met1–Asp39 constitute a mitochondrion transit peptide. ATP is bound at residue Gly103–Ser106. Residues Ser127, Glu198, and His226 each coordinate Mg(2+). ATP contacts are provided by Arg361 and Asp375. The disordered stretch occupies residues Glu477–Ser497. Phosphoserine is present on Ser537.

Belongs to the folylpolyglutamate synthase family. Monomer. A monovalent cation serves as cofactor.

The protein resides in the mitochondrion inner membrane. It localises to the mitochondrion matrix. Its subcellular location is the cytoplasm. It catalyses the reaction (6S)-5,6,7,8-tetrahydrofolyl-(gamma-L-Glu)(n) + L-glutamate + ATP = (6S)-5,6,7,8-tetrahydrofolyl-(gamma-L-Glu)(n+1) + ADP + phosphate + H(+). The protein operates within cofactor biosynthesis; tetrahydrofolylpolyglutamate biosynthesis. In terms of biological role, catalyzes conversion of folates to polyglutamate derivatives allowing concentration of folate compounds in the cell and the intracellular retention of these cofactors, which are important substrates for most of the folate-dependent enzymes that are involved in one-carbon transfer reactions involved in purine, pyrimidine and amino acid synthesis. The sequence is that of Folylpolyglutamate synthase, mitochondrial (FPGS) from Bos taurus (Bovine).